Reading from the N-terminus, the 358-residue chain is Heavy metal-associated isoprenylated plant protein 37 (358 aa).

The HMA domain occupies I12 to E75. A metal cation is bound by residues C23 and C26. Disordered regions lie at residues Q100–Q194 and Q332–M358. The span at A128–D141 shows a compositional bias: acidic residues. Over residues A148 to K181 the composition is skewed to low complexity. Composition is skewed to polar residues over residues Q184–Q194 and H339–M358. The residue at position 355 (C355) is a Cysteine methyl ester. C355 is lipidated: S-farnesyl cysteine. Positions N356–M358 are cleaved as a propeptide — removed in mature form.

Belongs to the HIPP family.

Functionally, heavy-metal-binding protein. In Arabidopsis thaliana (Mouse-ear cress), this protein is Heavy metal-associated isoprenylated plant protein 37.